The primary structure comprises 428 residues: Glucose-1-phosphate adenylyltransferase (428 aa).

Residues Tyr-114, Gly-179, 194-195, and Ser-212 each bind alpha-D-glucose 1-phosphate; that span reads EK.

This sequence belongs to the bacterial/plant glucose-1-phosphate adenylyltransferase family. In terms of assembly, homotetramer.

It catalyses the reaction alpha-D-glucose 1-phosphate + ATP + H(+) = ADP-alpha-D-glucose + diphosphate. Its pathway is glycan biosynthesis; glycogen biosynthesis. Involved in the biosynthesis of ADP-glucose, a building block required for the elongation reactions to produce glycogen. Catalyzes the reaction between ATP and alpha-D-glucose 1-phosphate (G1P) to produce pyrophosphate and ADP-Glc. This chain is Glucose-1-phosphate adenylyltransferase, found in Yersinia pseudotuberculosis serotype IB (strain PB1/+).